A 311-amino-acid chain; its full sequence is Porphobilinogen deaminase (311 aa).

Cys242 bears the S-(dipyrrolylmethanemethyl)cysteine mark.

It belongs to the HMBS family. As to quaternary structure, monomer. Dipyrromethane is required as a cofactor.

It carries out the reaction 4 porphobilinogen + H2O = hydroxymethylbilane + 4 NH4(+). The protein operates within porphyrin-containing compound metabolism; protoporphyrin-IX biosynthesis; coproporphyrinogen-III from 5-aminolevulinate: step 2/4. In terms of biological role, tetrapolymerization of the monopyrrole PBG into the hydroxymethylbilane pre-uroporphyrinogen in several discrete steps. In Vibrio cholerae serotype O1 (strain ATCC 39315 / El Tor Inaba N16961), this protein is Porphobilinogen deaminase (hemC).